We begin with the raw amino-acid sequence, 239 residues long: 2-C-methyl-D-erythritol 4-phosphate cytidylyltransferase (239 aa).

Belongs to the IspD/TarI cytidylyltransferase family. IspD subfamily.

The enzyme catalyses 2-C-methyl-D-erythritol 4-phosphate + CTP + H(+) = 4-CDP-2-C-methyl-D-erythritol + diphosphate. Its pathway is isoprenoid biosynthesis; isopentenyl diphosphate biosynthesis via DXP pathway; isopentenyl diphosphate from 1-deoxy-D-xylulose 5-phosphate: step 2/6. Its function is as follows. Catalyzes the formation of 4-diphosphocytidyl-2-C-methyl-D-erythritol from CTP and 2-C-methyl-D-erythritol 4-phosphate (MEP). The polypeptide is 2-C-methyl-D-erythritol 4-phosphate cytidylyltransferase (Acidobacterium capsulatum (strain ATCC 51196 / DSM 11244 / BCRC 80197 / JCM 7670 / NBRC 15755 / NCIMB 13165 / 161)).